A 277-amino-acid polypeptide reads, in one-letter code: 4-hydroxy-3-methylbut-2-enyl diphosphate reductase (277 aa).

Cysteine 12 serves as a coordination point for [4Fe-4S] cluster. Positions 36 and 70 each coordinate (2E)-4-hydroxy-3-methylbut-2-enyl diphosphate. Histidine 36 and histidine 70 together coordinate dimethylallyl diphosphate. Residues histidine 36 and histidine 70 each coordinate isopentenyl diphosphate. Residue cysteine 92 participates in [4Fe-4S] cluster binding. Histidine 120 is a (2E)-4-hydroxy-3-methylbut-2-enyl diphosphate binding site. Position 120 (histidine 120) interacts with dimethylallyl diphosphate. Histidine 120 lines the isopentenyl diphosphate pocket. Residue glutamate 122 is the Proton donor of the active site. Threonine 160 provides a ligand contact to (2E)-4-hydroxy-3-methylbut-2-enyl diphosphate. Cysteine 188 is a [4Fe-4S] cluster binding site. 4 residues coordinate (2E)-4-hydroxy-3-methylbut-2-enyl diphosphate: serine 216, serine 217, asparagine 218, and serine 260. Serine 216, serine 217, asparagine 218, and serine 260 together coordinate dimethylallyl diphosphate. Isopentenyl diphosphate is bound by residues serine 216, serine 217, asparagine 218, and serine 260.

Belongs to the IspH family. The cofactor is [4Fe-4S] cluster.

The enzyme catalyses isopentenyl diphosphate + 2 oxidized [2Fe-2S]-[ferredoxin] + H2O = (2E)-4-hydroxy-3-methylbut-2-enyl diphosphate + 2 reduced [2Fe-2S]-[ferredoxin] + 2 H(+). The catalysed reaction is dimethylallyl diphosphate + 2 oxidized [2Fe-2S]-[ferredoxin] + H2O = (2E)-4-hydroxy-3-methylbut-2-enyl diphosphate + 2 reduced [2Fe-2S]-[ferredoxin] + 2 H(+). It functions in the pathway isoprenoid biosynthesis; dimethylallyl diphosphate biosynthesis; dimethylallyl diphosphate from (2E)-4-hydroxy-3-methylbutenyl diphosphate: step 1/1. It participates in isoprenoid biosynthesis; isopentenyl diphosphate biosynthesis via DXP pathway; isopentenyl diphosphate from 1-deoxy-D-xylulose 5-phosphate: step 6/6. Its function is as follows. Catalyzes the conversion of 1-hydroxy-2-methyl-2-(E)-butenyl 4-diphosphate (HMBPP) into a mixture of isopentenyl diphosphate (IPP) and dimethylallyl diphosphate (DMAPP). Acts in the terminal step of the DOXP/MEP pathway for isoprenoid precursor biosynthesis. This Sulfurovum sp. (strain NBC37-1) protein is 4-hydroxy-3-methylbut-2-enyl diphosphate reductase.